Reading from the N-terminus, the 51-residue chain is UPF0181 protein VVA0806 (51 aa).

The protein belongs to the UPF0181 family.

In Vibrio vulnificus (strain YJ016), this protein is UPF0181 protein VVA0806.